The chain runs to 337 residues: G-protein coupled receptor 65 (337 aa).

The Extracellular portion of the chain corresponds to 1–5 (MNSTC). Asparagine 2 carries an N-linked (GlcNAc...) asparagine glycan. 2 cysteine pairs are disulfide-bonded: cysteine 5–cysteine 160 and cysteine 87–cysteine 170. The helical transmembrane segment at 6–42 (IEEQHDLDHYLFPIVYIFVIIVSIPANIGSLCVSFLQ) threads the bilayer. Topologically, residues 43–46 (AKKE) are cytoplasmic. The helical transmembrane segment at 47–77 (SELGIYLFSLSLSDLLYALTLPLWIDYTWNK) threads the bilayer. The Extracellular portion of the chain corresponds to 78–82 (DNWTF). The N-linked (GlcNAc...) asparagine glycan is linked to asparagine 79. The chain crosses the membrane as a helical span at residues 83-118 (SPALCKGSAFLMYMNFYSSTAFLTCIAVDRYLAVVY). The Cytoplasmic portion of the chain corresponds to 119 to 126 (PLKFFFLR). Residues 127–153 (TRRFALMVSLSIWILETIFNAVMLWED) traverse the membrane as a helical segment. Over 154-174 (ETVVEYCDAEKSNFTLCYDKY) the chain is Extracellular. The segment at 154–174 (ETVVEYCDAEKSNFTLCYDKY) is extracellular loop 2 (ECL2). A glycan (N-linked (GlcNAc...) asparagine) is linked at asparagine 166. A helical membrane pass occupies residues 175 to 212 (PLEKWQINLNLFRTCTGYAIPLVTILICNRKVYQAVRH). The Cytoplasmic portion of the chain corresponds to 213-216 (NKAT). A helical membrane pass occupies residues 217–252 (ENKEKKRIIKLLVSITVTFVLCFTPFHVMLLIRCIL). The Extracellular portion of the chain corresponds to 253–264 (EHAVNFEDHSNS). The helical transmembrane segment at 265 to 293 (GKRTYTMYRITVALTSLNCVADPILYCFV) threads the bilayer. The Cytoplasmic portion of the chain corresponds to 294 to 337 (TETGRYDMWNILKFCTGRCNTSQRQRKRILSVSTKDTMELEVLE).

This sequence belongs to the G-protein coupled receptor 1 family. As to expression, predominantly expressed in thymus, spleen, lymph nodes, small intestine, lung, placenta and peripheral blood leukocytes.

It is found in the cell membrane. The protein resides in the early endosome membrane. The protein localises to the late endosome membrane. Activated by a network of residues that connects an extracellular-facing cavity to Glu-142, a conserved charged residue buried in the transmembrane core of the receptor. Protonation likely drives conformational changes in extracellular loop 2 (ECL2), which stabilizes movement of transmembrane 3 (TM3) and a series of rearrangements that connect the extracellular-facing cavity to Glu-142, a residue only conserved in proton-sensing G-protein coupled receptors. Activated by BTB09089, a positive allosteric modulator. Functionally, proton-sensing G-protein coupled receptor activated by extracellular pH, which is required to monitor pH changes and generate adaptive reactions. Activated by an optimal pH of 7.4. Ligand binding causes a conformation change that triggers signaling via guanine nucleotide-binding proteins (G proteins) and modulates the activity of downstream effectors, such as adenylate cyclase. GPR65 is mainly coupled to G(s) G proteins and mediates activation of adenylate cyclase activity. May also act as a receptor for the glycosphingolipid psychosine (PSY) and several related glycosphingolipids. Plays a role in immune response by maintaining lysosome function and regulating T-cell metabolism. Acts as a regulator of inflammation by mediating pH-sensing of extracellular acidification which takes place in inflamed tissues: activation regulates endo-lysosomal function of immune cells and T-cell metabolism. Constitutively active in endosomes and stimulates adenylate cyclase production from endosomes independently from extracellular pH changes. In Homo sapiens (Human), this protein is G-protein coupled receptor 65.